Reading from the N-terminus, the 427-residue chain is Glutamate-1-semialdehyde 2,1-aminomutase (427 aa).

Lys-265 is subject to N6-(pyridoxal phosphate)lysine.

Belongs to the class-III pyridoxal-phosphate-dependent aminotransferase family. HemL subfamily. In terms of assembly, homodimer. It depends on pyridoxal 5'-phosphate as a cofactor.

It localises to the cytoplasm. The catalysed reaction is (S)-4-amino-5-oxopentanoate = 5-aminolevulinate. Its pathway is porphyrin-containing compound metabolism; protoporphyrin-IX biosynthesis; 5-aminolevulinate from L-glutamyl-tRNA(Glu): step 2/2. This is Glutamate-1-semialdehyde 2,1-aminomutase from Neisseria meningitidis serogroup C / serotype 2a (strain ATCC 700532 / DSM 15464 / FAM18).